The sequence spans 196 residues: Shikimate kinase (196 aa).

Residue 21–26 (GTGKSR) participates in ATP binding. Residue Ser-25 participates in Mg(2+) binding. Substrate is bound by residues Asp-43, Arg-67, and Gly-89. Arg-126 is an ATP binding site. Arg-145 contributes to the substrate binding site. Arg-161 serves as a coordination point for ATP.

Belongs to the shikimate kinase family. Monomer. Mg(2+) serves as cofactor.

The protein resides in the cytoplasm. The catalysed reaction is shikimate + ATP = 3-phosphoshikimate + ADP + H(+). It participates in metabolic intermediate biosynthesis; chorismate biosynthesis; chorismate from D-erythrose 4-phosphate and phosphoenolpyruvate: step 5/7. In terms of biological role, catalyzes the specific phosphorylation of the 3-hydroxyl group of shikimic acid using ATP as a cosubstrate. This Deinococcus radiodurans (strain ATCC 13939 / DSM 20539 / JCM 16871 / CCUG 27074 / LMG 4051 / NBRC 15346 / NCIMB 9279 / VKM B-1422 / R1) protein is Shikimate kinase.